The sequence spans 553 residues: Transmembrane protein DDB_G0292058 (553 aa).

Positions 1 to 26 (MIKINKILSLLIILLIINCNYQFVKA) are cleaved as a signal peptide. Transmembrane regions (helical) follow at residues 80-100 (ILLS…GIIF) and 137-157 (VFIL…VFIT). N-linked (GlcNAc...) asparagine glycosylation is found at Asn162, Asn171, Asn178, and Asn195. 2 consecutive transmembrane segments (helical) span residues 243–263 (IIIV…VSAL) and 274–294 (SIAL…HYPI). Residues Asn315, Asn332, Asn351, Asn396, Asn405, and Asn462 are each glycosylated (N-linked (GlcNAc...) asparagine). A helical transmembrane segment spans residues 515-535 (LLIAPTAVFAILLTGLGITGI).

It is found in the membrane. The chain is Transmembrane protein DDB_G0292058 from Dictyostelium discoideum (Social amoeba).